The chain runs to 396 residues: Elongation factor Tu (396 aa).

One can recognise a tr-type G domain in the interval 10-206; sequence KPHVNVGTIG…ALDSYIPTPE (197 aa). The G1 stretch occupies residues 19–26; sequence GHVDHGKT. 19–26 contacts GTP; it reads GHVDHGKT. Thr-26 contacts Mg(2+). Residues 60–64 form a G2 region; the sequence is GITIN. The interval 81-84 is G3; it reads DCPG. Residues 81–85 and 136–139 contribute to the GTP site; these read DCPGH and NKCD. The G4 stretch occupies residues 136–139; it reads NKCD. Residues 174–176 are G5; it reads SAL.

Belongs to the TRAFAC class translation factor GTPase superfamily. Classic translation factor GTPase family. EF-Tu/EF-1A subfamily. As to quaternary structure, monomer.

It is found in the cytoplasm. It catalyses the reaction GTP + H2O = GDP + phosphate + H(+). Functionally, GTP hydrolase that promotes the GTP-dependent binding of aminoacyl-tRNA to the A-site of ribosomes during protein biosynthesis. The chain is Elongation factor Tu from Azoarcus sp. (strain BH72).